The chain runs to 372 residues: Delta-type opioid receptor (372 aa).

Residues 1 to 47 are Extracellular-facing; sequence MEPVPSARAELQFSLLANVSDTFPSAFPSASANASGSPGARSASSLA. Residues Asn18 and Asn33 are each glycosylated (N-linked (GlcNAc...) asparagine). The chain crosses the membrane as a helical span at residues 48–75; sequence LAIAITALYSAVCAVGLLGNVLVMFGIV. At 76-85 the chain is on the cytoplasmic side; the sequence is RYTKLKTATN. The helical transmembrane segment at 86 to 110 threads the bilayer; the sequence is IYIFNLALADALATSTLPFQSAKYL. Topologically, residues 111–122 are extracellular; the sequence is METWPFGELLCK. A disulfide bond links Cys121 and Cys198. Residues 123 to 144 traverse the membrane as a helical segment; sequence AVLSIDYYNMFTSIFTLTMMSV. Residues 145–163 lie on the Cytoplasmic side of the membrane; sequence DRYIAVCHPVKALDFRTPA. Residues 164 to 186 traverse the membrane as a helical segment; it reads KAKLINICIWVLASGVGVPIMVM. The Extracellular portion of the chain corresponds to 187–206; it reads AVTQPRDGAVVCTLQFPSPS. The chain crosses the membrane as a helical span at residues 207 to 238; the sequence is WYWDTVTKICVFLFAFVVPILIITVCYGLMLL. Topologically, residues 239–261 are cytoplasmic; that stretch reads RLRSVRLLSGSKEKDRSLRRITR. A helical transmembrane segment spans residues 262-284; sequence MVLVVVGAFVVCWAPIHIFVIVW. Topologically, residues 285-299 are extracellular; sequence TLVDINRRDPLVVAA. A helical membrane pass occupies residues 300–321; sequence LHLCIALGYANSSLNPVLYAFL. The Cytoplasmic segment spans residues 322-372; sequence DENFKRCFRQLCRAPCGGQEPGSLRRPRQATARERVTACTPSDGPGGGAAA. Cys333 is lipidated: S-palmitoyl cysteine. The tract at residues 340 to 372 is disordered; the sequence is QEPGSLRRPRQATARERVTACTPSDGPGGGAAA.

This sequence belongs to the G-protein coupled receptor 1 family. In terms of assembly, may form homooligomers. Forms a heterodimer with OPRM1. Interacts with GPRASP1. Interacts with RTP4; the interaction promotes cell surface localization of the OPRD1-OPRM1 heterodimer. Ubiquitinated. A basal ubiquitination seems not to be related to degradation. Ubiquitination is increased upon formation of OPRM1:OPRD1 oligomers leading to proteasomal degradation; the ubiquitination is diminished by RTP4. Detected in brain, brain stem and brain cortex.

The protein resides in the cell membrane. Its function is as follows. G-protein coupled receptor that functions as a receptor for endogenous enkephalins and for a subset of other opioids. Ligand binding causes a conformation change that triggers signaling via guanine nucleotide-binding proteins (G proteins) and modulates the activity of down-stream effectors, such as adenylate cyclase. Signaling leads to the inhibition of adenylate cyclase activity. Inhibits neurotransmitter release by reducing calcium ion currents and increasing potassium ion conductance. Plays a role in the perception of pain and in opiate-mediated analgesia. Plays a role in developing analgesic tolerance to morphine. The protein is Delta-type opioid receptor (Oprd1) of Rattus norvegicus (Rat).